The primary structure comprises 610 residues: Dihydroxy-acid dehydratase (610 aa).

Asp-81 provides a ligand contact to Mg(2+). Cys-122 contacts [2Fe-2S] cluster. Residues Asp-123 and Lys-124 each coordinate Mg(2+). Lys-124 is subject to N6-carboxylysine. Position 193 (Cys-193) interacts with [2Fe-2S] cluster. Glu-489 is a binding site for Mg(2+). Ser-515 serves as the catalytic Proton acceptor.

This sequence belongs to the IlvD/Edd family. In terms of assembly, homodimer. [2Fe-2S] cluster serves as cofactor. Mg(2+) is required as a cofactor.

It catalyses the reaction (2R)-2,3-dihydroxy-3-methylbutanoate = 3-methyl-2-oxobutanoate + H2O. The enzyme catalyses (2R,3R)-2,3-dihydroxy-3-methylpentanoate = (S)-3-methyl-2-oxopentanoate + H2O. It functions in the pathway amino-acid biosynthesis; L-isoleucine biosynthesis; L-isoleucine from 2-oxobutanoate: step 3/4. The protein operates within amino-acid biosynthesis; L-valine biosynthesis; L-valine from pyruvate: step 3/4. Its function is as follows. Functions in the biosynthesis of branched-chain amino acids. Catalyzes the dehydration of (2R,3R)-2,3-dihydroxy-3-methylpentanoate (2,3-dihydroxy-3-methylvalerate) into 2-oxo-3-methylpentanoate (2-oxo-3-methylvalerate) and of (2R)-2,3-dihydroxy-3-methylbutanoate (2,3-dihydroxyisovalerate) into 2-oxo-3-methylbutanoate (2-oxoisovalerate), the penultimate precursor to L-isoleucine and L-valine, respectively. This chain is Dihydroxy-acid dehydratase, found in Xylella fastidiosa (strain M23).